The following is a 180-amino-acid chain: Major urinary protein 17 (180 aa).

An N-terminal signal peptide occupies residues 1-18 (MKMLLLLCLGLTLVCVHA). An intrachain disulfide couples C82 to C175.

The protein belongs to the calycin superfamily. Lipocalin family. Because of their involvement in the coordination of social behavior, Mup proteins are thought to exhibit variable expression depending upon gender, age and status of the studied individuals. Expression may also be strain-specific: in strains C57BL/6J and 129S7, transcriptional support is lacking for Mup17.

The protein resides in the secreted. In terms of biological role, major urinary proteins (Mups) bind pheromones, thus stabilize them and allow slow release into the air from urine marks. May protect pheromones from oxidation. May also act as pheromones themselves. In this context, they play a role in the regulation of social behaviors, such as aggression, mating, pup-suckling, territory establishment and dominance. This Mus musculus (Mouse) protein is Major urinary protein 17 (Mup17).